The sequence spans 679 residues: Glycine--tRNA ligase beta subunit (679 aa).

Belongs to the class-II aminoacyl-tRNA synthetase family. As to quaternary structure, tetramer of two alpha and two beta subunits.

It localises to the cytoplasm. The catalysed reaction is tRNA(Gly) + glycine + ATP = glycyl-tRNA(Gly) + AMP + diphosphate. The polypeptide is Glycine--tRNA ligase beta subunit (Streptococcus pyogenes serotype M4 (strain MGAS10750)).